Here is a 168-residue protein sequence, read N- to C-terminus: ATP synthase F(1) complex subunit delta, mitochondrial (168 aa).

Residues 1 to 22 (MLPSALLRRPGLGRLVRQVRLY) constitute a mitochondrion transit peptide. An N6-acetyllysine; alternate mark is found at K136 and K165. K136 and K165 each carry N6-succinyllysine; alternate.

This sequence belongs to the ATPase epsilon chain family. As to quaternary structure, component of the ATP synthase complex composed at least of ATP5F1A/subunit alpha, ATP5F1B/subunit beta, ATP5MC1/subunit c (homooctomer), MT-ATP6/subunit a, MT-ATP8/subunit 8, ATP5ME/subunit e, ATP5MF/subunit f, ATP5MG/subunit g, ATP5MK/subunit k, ATP5MJ/subunit j, ATP5F1C/subunit gamma, ATP5F1D/subunit delta, ATP5F1E/subunit epsilon, ATP5PF/subunit F6, ATP5PB/subunit b, ATP5PD/subunit d, ATP5PO/subunit OSCP. ATP synthase complex consists of a soluble F(1) head domain (subunits alpha(3) and beta(3)) - the catalytic core - and a membrane F(0) domain - the membrane proton channel (subunits c, a, 8, e, f, g, k and j). These two domains are linked by a central stalk (subunits gamma, delta, and epsilon) rotating inside the F1 region and a stationary peripheral stalk (subunits F6, b, d, and OSCP). Component of a complex composed at least by ATPIF1, ATP5F1A, ATP5F1B, ATP5F1C AND ATP5F1E.

Its subcellular location is the mitochondrion. It localises to the mitochondrion inner membrane. In terms of biological role, subunit delta, of the mitochondrial membrane ATP synthase complex (F(1)F(0) ATP synthase or Complex V) that produces ATP from ADP in the presence of a proton gradient across the membrane which is generated by electron transport complexes of the respiratory chain. ATP synthase complex consist of a soluble F(1) head domain - the catalytic core - and a membrane F(1) domain - the membrane proton channel. These two domains are linked by a central stalk rotating inside the F(1) region and a stationary peripheral stalk. During catalysis, ATP synthesis in the catalytic domain of F(1) is coupled via a rotary mechanism of the central stalk subunits to proton translocation. In vivo, can only synthesize ATP although its ATP hydrolase activity can be activated artificially in vitro. With the central stalk subunit gamma, is essential for the biogenesis of F(1) catalytic part of the ATP synthase complex namely in the formation of F1 assembly intermediate. In Bos taurus (Bovine), this protein is ATP synthase F(1) complex subunit delta, mitochondrial.